The following is a 94-amino-acid chain: Cell division protein FtsB (94 aa).

Over 1–3 the chain is Cytoplasmic; that stretch reads MRW. A helical membrane pass occupies residues 4–21; that stretch reads LTVGLLAAIGLLQYPLWV. The Periplasmic portion of the chain corresponds to 22-94; it reads GKGGWLKVWE…VQIPEKVPGK (73 aa). Positions 31–73 form a coiled coil; sequence EYDRQLQQQKEVTRKLEIRNAGLDAEVRDLKQGYDAIEERARF.

It belongs to the FtsB family. In terms of assembly, part of a complex composed of FtsB, FtsL and FtsQ.

It is found in the cell inner membrane. Functionally, essential cell division protein. May link together the upstream cell division proteins, which are predominantly cytoplasmic, with the downstream cell division proteins, which are predominantly periplasmic. This is Cell division protein FtsB from Dechloromonas aromatica (strain RCB).